We begin with the raw amino-acid sequence, 464 residues long: Protein FAM90A8 (464 aa).

Disordered regions lie at residues 1–42 (MMAR…DPRL), 69–389 (VPAT…HDGA), and 415–437 (HSPE…SEAP). Composition is skewed to basic and acidic residues over residues 74–89 (GKKE…KPRG) and 97–114 (NKDK…DPQR). Positions 180 to 197 (LASLSPLRKASLSSSSSL) are enriched in low complexity.

It belongs to the FAM90 family.

This chain is Protein FAM90A8 (FAM90A8), found in Homo sapiens (Human).